The chain runs to 326 residues: Microtubule-associated protein RP/EB family member 2 (326 aa).

At serine 9 the chain carries Phosphoserine. The region spanning 56 to 158 (TMSRHDIIAW…FIQWFKKFYD (103 aa)) is the Calponin-homology (CH) domain. Tyrosine 166 carries the phosphotyrosine modification. Disordered regions lie at residues 170–239 (EARQ…DKDL) and 297–326 (YASD…QEEY). The tract at residues 186 to 326 (QIFNLPKKSH…DQQPQQQEEY (141 aa)) is DCTN1-binding. Residues 199–233 (SPTAGAAKSSPASKPGSTPSRPSSAKRASSSGSAS) are compositionally biased toward low complexity. 2 positions are modified to phosphoserine: serine 218 and serine 235. The 71-residue stretch at 235–305 (SDKDLETQVI…LYASDEQEGQ (71 aa)) folds into the EB1 C-terminal domain. The interval 258-301 (EGVEKERDFYFGKLREIELLCQEHGQENDDLVQRLMEVLYASDE) is APC-binding. The segment covering 300 to 312 (DEQEGQTEEPEAE) has biased composition (acidic residues). The span at 317 to 326 (DQQPQQQEEY) shows a compositional bias: low complexity.

This sequence belongs to the MAPRE family. As to quaternary structure, interacts with DCTN1. Interacts with APC (via C-terminal). Interacts with monomeric and polymerized tubulin. Interacts with SLAIN1. Interacts (via the N-terminal region) with BAG1. Interacts with ASB14. In terms of processing, ubiquitinated in an ASB14-dependent manner; leading to proteasomal degradation. Phosphorylated at Ser-235 by CK2 leading to enhanced cell adhesion. Phosphorylated by CDK1 and AURKB during mitosis reduces the binding affinity of MAPRE2 for microtubules. In terms of tissue distribution, expressed during early stages of apico-basal epithelial differentiation but down-regulated in most cells at later stages.

The protein localises to the cytoplasm. Its subcellular location is the cytoskeleton. The protein resides in the spindle. Functionally, adapter protein that is involved in microtubule polymerization, and spindle function by stabilizing microtubules and anchoring them at centrosomes. Therefore, ensures mitotic progression and genome stability. Acts as a central regulator of microtubule reorganization in apico-basal epithelial differentiation. Plays a role during oocyte meiosis by regulating microtubule dynamics. Participates in neurite growth by interacting with plexin B3/PLXNB3 and microtubule reorganization during apico-basal epithelial differentiation. Plays also an essential role for cell migration and focal adhesion dynamics. Mechanistically, recruits HAX1 to microtubules in order to regulate focal adhesion dynamics. This is Microtubule-associated protein RP/EB family member 2 (Mapre2) from Mus musculus (Mouse).